The following is a 469-amino-acid chain: MVISESMDILFRIRGGLDLAFQLATPNEIFLKKALKHVLSDLSTKLSSNALVFRICHSSVYIWPSSDINTIPGELTDASACKNILRFIQFEPEEDIKRKFMRKKDKKLSDMHQIVNIDLMLEMSTSLAAVTPIVERESGGHHYVNMTLPVDAVISVAPEETWGKVRKLLVDAIHNQLTDMEKCILKYMKGTSIVVPEPLHFLLPGKKNLVTISYPSGIPDGQLQAYREELHDLFNLPHDRPYFKRSNAYHFPDEPYKDGYIRNPHTYLNPPNMETGMIYVVQGIYGYHHYMQDRIDDNGWGCAYRSLQTICSWFKHQGYTERSIPTHREIQQALVDAGDKPATFVGSRQWIGSIEVQLVLNQLIGITSKILFVSQGSEIASQGRELANHFQSEGTPVMIGGGVLAHTILGVAWNEITGQIKFLILDPHYTGAEDLQVILEKGWCGWKGPDFWNKDAYYNLCLPQRPNMI.

M1 is modified (N-acetylmethionine). Active-site residues include C302, D426, and H428.

This sequence belongs to the peptidase C78 family.

Its subcellular location is the endoplasmic reticulum. It is found in the cytoplasm. The protein resides in the nucleus. In terms of biological role, thiol-dependent isopeptidase that specifically cleaves UFM1, a ubiquitin-like modifier protein, from conjugated proteins, such as CD274/PD-L1, CYB5R3, DDRGK1, MRE11, RPL26/uL24, TRIP4 and RPL26/uL24. While it is also able to mediate the processing of UFM1 precursors, a prerequisite for conjugation reactions, UFSP2 mainly acts as a protein deUFMylase that mediates deconjugation of UFM1 from target proteins. Mediates deUFMylation of RPL26/uL24, a critical step to release the UFM1 ribosome E3 ligase (UREL) complex during the recycling of 60S ribosome subunits from the endoplasmic reticulum. Catalyzes deUFMylation of TRIP4, regulating intracellular nuclear receptors transactivation and thereby regulate cell proliferation and differentiation. The chain is Ufm1-specific protease 2 from Pongo abelii (Sumatran orangutan).